Here is a 579-residue protein sequence, read N- to C-terminus: Polyadenylate-binding protein, cytoplasmic and nuclear (579 aa).

Residues Met1–Glu10 show a composition bias toward basic and acidic residues. The segment at Met1–Thr32 is disordered. RRM domains follow at residues Ala35–Arg113, Gly123–Ser200, Thr216–Lys293, and Ile319–Arg396. The 80-residue stretch at Gly487–Gln566 folds into the PABC domain. Residues Ala560–Ala579 form a disordered region. Residues Gln566 to Ala579 are compositionally biased toward low complexity.

The protein belongs to the polyadenylate-binding protein type-1 family.

Its subcellular location is the cytoplasm. It localises to the nucleus. In terms of biological role, binds the poly(A) tail of mRNA. Appears to be an important mediator of the multiple roles of the poly(A) tail in mRNA biogenesis, stability and translation. In the nucleus, involved in both mRNA cleavage and polyadenylation. Is also required for efficient mRNA export to the cytoplasm. Acts in concert with a poly(A)-specific nuclease (PAN) to affect poly(A) tail shortening, which may occur concomitantly with either nucleocytoplasmic mRNA transport or translational initiation. In the cytoplasm, stimulates translation initiation and regulates mRNA decay through translation termination-coupled poly(A) shortening, probably mediated by PAN. The sequence is that of Polyadenylate-binding protein, cytoplasmic and nuclear (PAB1) from Candida glabrata (strain ATCC 2001 / BCRC 20586 / JCM 3761 / NBRC 0622 / NRRL Y-65 / CBS 138) (Yeast).